We begin with the raw amino-acid sequence, 211 residues long: Protein-L-isoaspartate O-methyltransferase (211 aa).

S60 is an active-site residue.

This sequence belongs to the methyltransferase superfamily. L-isoaspartyl/D-aspartyl protein methyltransferase family.

It is found in the cytoplasm. It catalyses the reaction [protein]-L-isoaspartate + S-adenosyl-L-methionine = [protein]-L-isoaspartate alpha-methyl ester + S-adenosyl-L-homocysteine. In terms of biological role, catalyzes the methyl esterification of L-isoaspartyl residues in peptides and proteins that result from spontaneous decomposition of normal L-aspartyl and L-asparaginyl residues. It plays a role in the repair and/or degradation of damaged proteins. The protein is Protein-L-isoaspartate O-methyltransferase of Pseudomonas aeruginosa (strain LESB58).